A 121-amino-acid polypeptide reads, in one-letter code: uncharacterized protein (121 aa).

A CHCH domain is found at Leu-43–Glu-86. 2 consecutive short sequence motifs (cx9C motif) follow at residues Cys-46–Cys-56 and Cys-68–Cys-78. Disulfide bonds link Cys-46/Cys-78 and Cys-56/Cys-68.

Belongs to the CMC family.

This is an uncharacterized protein from Dictyostelium discoideum (Social amoeba).